A 257-amino-acid chain; its full sequence is 5'-nucleotidase SurE (257 aa).

Positions 9, 10, 40, and 92 each coordinate a divalent metal cation.

This sequence belongs to the SurE nucleotidase family. The cofactor is a divalent metal cation.

The protein localises to the cytoplasm. It catalyses the reaction a ribonucleoside 5'-phosphate + H2O = a ribonucleoside + phosphate. Nucleotidase that shows phosphatase activity on nucleoside 5'-monophosphates. The polypeptide is 5'-nucleotidase SurE (Alkalilimnicola ehrlichii (strain ATCC BAA-1101 / DSM 17681 / MLHE-1)).